Here is a 213-residue protein sequence, read N- to C-terminus: Serine acetyltransferase (213 aa).

The protein belongs to the transferase hexapeptide repeat family.

The protein resides in the cytoplasm. It catalyses the reaction L-serine + acetyl-CoA = O-acetyl-L-serine + CoA. The protein operates within amino-acid biosynthesis; L-cysteine biosynthesis; L-cysteine from L-serine: step 1/2. The sequence is that of Serine acetyltransferase (cysE) from Staphylococcus aureus (strain COL).